The chain runs to 162 residues: MGRMKDRNASAGPEVKPAGLSPSRFVKVFMHGEPFERKINLAIHNNYDSLSFTLKRLGNNYSMSPFELEGFVNNEEDGAIDNDFDLLYDDMNGVRYLLGEVPWEVFTITVKRIYIVPAEQQNESEYQEEEEDNAAAAATADEDVDGNHWWRNHLWSVGPILQ.

Residues 23–118 form the PB1 domain; sequence SRFVKVFMHG…TVKRIYIVPA (96 aa). The interval 122 to 141 is disordered; it reads NESEYQEEEEDNAAAAATAD.

The protein belongs to the Aux/IAA family. Homodimers and heterodimers.

The protein localises to the nucleus. Aux/IAA proteins are short-lived transcriptional factors that function as repressors of early auxin response genes at low auxin concentrations. The polypeptide is Putative auxin-responsive protein IAA28 (IAA28) (Oryza sativa subsp. japonica (Rice)).